A 641-amino-acid chain; its full sequence is Mannosyl-oligosaccharide 1,2-alpha-mannosidase IB (641 aa).

Thr2 is modified (N-acetylthreonine). The Cytoplasmic portion of the chain corresponds to 2 to 36 (TTPALLPLSGRRIPPLNLGPPSFPHHRATLRLSEK). A helical; Signal-anchor for type II membrane protein transmembrane segment spans residues 37-57 (FILLLILSAFITLCFGAFFFL). Residues 58 to 641 (PDSSKHKRFD…TTLSGNPAVR (584 aa)) are Lumenal-facing. The interval 153–175 (NKPLPPVPIPNLVGIRGGDPEDN) is disordered. Residues Cys462 and Cys494 are joined by a disulfide bond. Residue Glu508 is the Proton donor of the active site. Thr619 is a binding site for Ca(2+). The N-linked (GlcNAc...) asparagine glycan is linked to Asn631.

Belongs to the glycosyl hydrolase 47 family. Ca(2+) is required as a cofactor. In terms of tissue distribution, highest levels of expression in placenta and testis.

The protein resides in the golgi apparatus membrane. The catalysed reaction is N(4)-(alpha-D-Man-(1-&gt;2)-alpha-D-Man-(1-&gt;2)-alpha-D-Man-(1-&gt;3)-[alpha-D-Man-(1-&gt;2)-alpha-D-Man-(1-&gt;3)-[alpha-D-Man-(1-&gt;2)-alpha-D-Man-(1-&gt;6)]-alpha-D-Man-(1-&gt;6)]-beta-D-Man-(1-&gt;4)-beta-D-GlcNAc-(1-&gt;4)-beta-D-GlcNAc)-L-asparaginyl-[protein] (N-glucan mannose isomer 9A1,2,3B1,2,3) + 4 H2O = N(4)-(alpha-D-Man-(1-&gt;3)-[alpha-D-Man-(1-&gt;3)-[alpha-D-Man-(1-&gt;6)]-alpha-D-Man-(1-&gt;6)]-beta-D-Man-(1-&gt;4)-beta-D-GlcNAc-(1-&gt;4)-beta-D-GlcNAc)-L-asparaginyl-[protein] (N-glucan mannose isomer 5A1,2) + 4 beta-D-mannose. It catalyses the reaction N(4)-(alpha-D-Man-(1-&gt;2)-alpha-D-Man-(1-&gt;2)-alpha-D-Man-(1-&gt;3)-[alpha-D-Man-(1-&gt;3)-[alpha-D-Man-(1-&gt;2)-alpha-D-Man-(1-&gt;6)]-alpha-D-Man-(1-&gt;6)]-beta-D-Man-(1-&gt;4)-beta-D-GlcNAc-(1-&gt;4)-beta-D-GlcNAc)-L-asparaginyl-[protein] (N-glucan mannose isomer 8A1,2,3B1,3) + 3 H2O = N(4)-(alpha-D-Man-(1-&gt;3)-[alpha-D-Man-(1-&gt;3)-[alpha-D-Man-(1-&gt;6)]-alpha-D-Man-(1-&gt;6)]-beta-D-Man-(1-&gt;4)-beta-D-GlcNAc-(1-&gt;4)-beta-D-GlcNAc)-L-asparaginyl-[protein] (N-glucan mannose isomer 5A1,2) + 3 beta-D-mannose. It participates in protein modification; protein glycosylation. Its activity is regulated as follows. Inhibited by both 1-deoxymannojirimycin and kifunensine. Involved in the maturation of Asn-linked oligosaccharides. Progressively trim alpha-1,2-linked mannose residues from Man(9)GlcNAc(2) to produce Man(5)GlcNAc(2). The sequence is that of Mannosyl-oligosaccharide 1,2-alpha-mannosidase IB (MAN1A2) from Homo sapiens (Human).